The following is a 206-amino-acid chain: Large ribosomal subunit protein uL3 (206 aa).

Residues 127 to 151 (SGGPSSHGSKFHRHLGGTGQATTPA) are disordered.

This sequence belongs to the universal ribosomal protein uL3 family. As to quaternary structure, part of the 50S ribosomal subunit. Forms a cluster with proteins L14 and L19.

Its function is as follows. One of the primary rRNA binding proteins, it binds directly near the 3'-end of the 23S rRNA, where it nucleates assembly of the 50S subunit. This Borrelia garinii subsp. bavariensis (strain ATCC BAA-2496 / DSM 23469 / PBi) (Borreliella bavariensis) protein is Large ribosomal subunit protein uL3.